The primary structure comprises 72 residues: Prophage late control protein OgrK (72 aa).

Its function is as follows. Cryptic version of the phage P2 OGR protein which acts as an activator of P2 late transcription. The chain is Prophage late control protein OgrK (ogrK) from Escherichia coli (strain K12).